We begin with the raw amino-acid sequence, 103 residues long: Small ribosomal subunit protein uS10 (103 aa).

The protein belongs to the universal ribosomal protein uS10 family. In terms of assembly, part of the 30S ribosomal subunit.

Involved in the binding of tRNA to the ribosomes. The polypeptide is Small ribosomal subunit protein uS10 (Bordetella avium (strain 197N)).